Consider the following 64-residue polypeptide: Large ribosomal subunit protein bL35 (64 aa).

The protein belongs to the bacterial ribosomal protein bL35 family.

In Pseudomonas putida (strain W619), this protein is Large ribosomal subunit protein bL35.